The primary structure comprises 264 residues: Ribosomal protein L11 methyltransferase (264 aa).

Positions 116, 137, 159, and 200 each coordinate S-adenosyl-L-methionine.

The protein belongs to the methyltransferase superfamily. PrmA family.

Its subcellular location is the cytoplasm. It catalyses the reaction L-lysyl-[protein] + 3 S-adenosyl-L-methionine = N(6),N(6),N(6)-trimethyl-L-lysyl-[protein] + 3 S-adenosyl-L-homocysteine + 3 H(+). Functionally, methylates ribosomal protein L11. The sequence is that of Ribosomal protein L11 methyltransferase from Thermotoga neapolitana (strain ATCC 49049 / DSM 4359 / NBRC 107923 / NS-E).